The chain runs to 193 residues: Phosphoheptose isomerase (193 aa).

In terms of domain architecture, SIS spans 37 to 193 (IAQSFKNEKK…LIIEKEMQKN (157 aa)). 52-54 (NGG) lines the substrate pocket. His61 and Glu65 together coordinate Zn(2+). Substrate-binding positions include Glu65, 93–94 (ND), 119–121 (STS), Ser124, and Gln172. Residues Gln172 and His180 each contribute to the Zn(2+) site.

It belongs to the SIS family. GmhA subfamily. Homotetramer. Zn(2+) is required as a cofactor.

Its subcellular location is the cytoplasm. It catalyses the reaction 2 D-sedoheptulose 7-phosphate = D-glycero-alpha-D-manno-heptose 7-phosphate + D-glycero-beta-D-manno-heptose 7-phosphate. The protein operates within carbohydrate biosynthesis; D-glycero-D-manno-heptose 7-phosphate biosynthesis; D-glycero-alpha-D-manno-heptose 7-phosphate and D-glycero-beta-D-manno-heptose 7-phosphate from sedoheptulose 7-phosphate: step 1/1. In terms of biological role, catalyzes the isomerization of sedoheptulose 7-phosphate in D-glycero-D-manno-heptose 7-phosphate. The chain is Phosphoheptose isomerase from Buchnera aphidicola subsp. Acyrthosiphon pisum (strain 5A).